Consider the following 868-residue polypeptide: MGKSLVIVESPAKAKTINKYLGSQYVVKSSIGHIRDLPTSGSSSSKEPAAKGRKSASEAPALSPKEKARRQLVSRMGVDPEHGWKAKYEILPGKEKVIDELRRLAKDADTVYLATDLDREGEAIAWHLREAIGGDESRYKRVVFNEITKKAIQEAFSQPGELDINRVNAQQARRFLDRVVGYMVSPLLWQKIARGLSAGRVQSVAVKLVVEREREIRAFVPEEYWEVHADLGTAKGANVRFEVTREKGEAFKPLNEAQAMAALEKLKASAYSVAKREDRPTSSRPSAPFITSTLQQAASNRLGFGVKKTMMMAQRLYEAGYITYMRTDSTNLSADAIGMVRGFIEDEFGQKYLPGKANVYSSKEGAQEAHEAIRPSDVNLKPTQLSGMERDAERLYDLIWRQFVACQMTPAEYLSTSVSVTAGDFELRAKGRILKFDGYTRVLPQQSKPGEDDVLPEMKEGENLKLIKLDPSQHFTKPPARYSEASLVKELEKRGIGRPSTYAAIISTIQERGYVTTHNRRFYAEKMGDIVTDRLNESFANLMDYGFTAGMEEHLDDVAQGERDWKHLLDEFYGDFKKKLEVAEVSEKGMRANQPTLTNIPCRECGRPMMIRTASTGVFLGCSGYSLPPKERCKATVNLIPGDEIAADDEGESESRVLRGKHRCPICSTAMDAYLLDEKHKLHICGNNPDCPGYEIEEGQYRIKGYEGPSLECDKCGSEMQLKTGRFGKFFGCTNPTCKNTRKLLKNGEAAPPKMDAIRMPELKCEKVDDIYVLRDGASGMFLAASQFPKNRETRAPLVSEIIPHKAELDPKYHYLCDAPQKDPDGRPAVIRFSRKTKEQYVQSEVDGKPTGWRAFYDGGKWKVEDKR.

A Toprim domain is found at 3 to 147 (KSLVIVESPA…RYKRVVFNEI (145 aa)). Residue Glu-9 coordinates Mg(2+). The segment at 34–70 (IRDLPTSGSSSSKEPAAKGRKSASEAPALSPKEKARR) is disordered. Residue Asp-116 coordinates Mg(2+). One can recognise a Topo IA-type catalytic domain in the interval 163-580 (DINRVNAQQA…EFYGDFKKKL (418 aa)). Positions 197–202 (SAGRVQ) are interaction with DNA. Tyr-324 serves as the catalytic O-(5'-phospho-DNA)-tyrosine intermediate. C4-type zinc fingers lie at residues 602 to 633 (CREC…KERC), 664 to 691 (CPIC…NPDC), and 713 to 738 (CDKC…NPTC).

The protein belongs to the type IA topoisomerase family. Monomer. Mg(2+) is required as a cofactor.

The enzyme catalyses ATP-independent breakage of single-stranded DNA, followed by passage and rejoining.. Its function is as follows. Releases the supercoiling and torsional tension of DNA, which is introduced during the DNA replication and transcription, by transiently cleaving and rejoining one strand of the DNA duplex. Introduces a single-strand break via transesterification at a target site in duplex DNA. The scissile phosphodiester is attacked by the catalytic tyrosine of the enzyme, resulting in the formation of a DNA-(5'-phosphotyrosyl)-enzyme intermediate and the expulsion of a 3'-OH DNA strand. The free DNA strand then undergoes passage around the unbroken strand, thus removing DNA supercoils. Finally, in the religation step, the DNA 3'-OH attacks the covalent intermediate to expel the active-site tyrosine and restore the DNA phosphodiester backbone. The protein is DNA topoisomerase 1 of Pseudomonas aeruginosa (strain ATCC 15692 / DSM 22644 / CIP 104116 / JCM 14847 / LMG 12228 / 1C / PRS 101 / PAO1).